Consider the following 361-residue polypeptide: Peptide chain release factor 1 (361 aa).

Gln-237 carries the post-translational modification N5-methylglutamine. The segment covering 285–296 has biased composition (basic and acidic residues); it reads DEKRRSAEESTR. The segment at 285–305 is disordered; the sequence is DEKRRSAEESTRRNLVGSGDR.

It belongs to the prokaryotic/mitochondrial release factor family. In terms of processing, methylated by PrmC. Methylation increases the termination efficiency of RF1.

It localises to the cytoplasm. Its function is as follows. Peptide chain release factor 1 directs the termination of translation in response to the peptide chain termination codons UAG and UAA. This is Peptide chain release factor 1 from Shewanella sediminis (strain HAW-EB3).